The chain runs to 542 residues: Sensor protein CitS (542 aa).

Residues 1–13 (MVKKRFHFSLQTK) lie on the Cytoplasmic side of the membrane. Residues 14 to 34 (IMGLIAALLVFVIGVLTITLA) traverse the membrane as a helical segment. Topologically, residues 35-175 (VQHTQGERRQ…TEQSIKKHLR (141 aa)) are extracellular. The chain crosses the membrane as a helical span at residues 176 to 196 (NLSVIAVLVLLLGFIGAAVLA). Residues 197–542 (KSIRKDTLGL…PFDSHRDCGG (346 aa)) are Cytoplasmic-facing. The PAS domain occupies 216-279 (RERNAMLFAI…MSVLEKGEML (64 aa)). One can recognise a Histidine kinase domain in the interval 336-528 (AQTHEFSNKL…VFTVFIPKEK (193 aa)). H339 carries the post-translational modification Phosphohistidine; by autocatalysis.

Its subcellular location is the cell membrane. The enzyme catalyses ATP + protein L-histidine = ADP + protein N-phospho-L-histidine.. Functionally, member of the two-component regulatory system CitT/CitS. Regulates the expression of the citM-yflN operon. Functions probably as a membrane-associated protein kinase that phosphorylates CitT in response to environmental citrate or Mg(2+)-citrate complex. The polypeptide is Sensor protein CitS (citS) (Bacillus subtilis (strain 168)).